Here is a 435-residue protein sequence, read N- to C-terminus: Probable exopolygalacturonase X (435 aa).

The N-terminal stretch at 1–22 is a signal peptide; it reads MRLTHVLSHTLGLLALGATAEA. Residues 31 to 55 form a disordered region; that stretch reads CSPKKPFRPLPTSSSRDKTCHVRSH. Basic and acidic residues predominate over residues 45–55; the sequence is SRDKTCHVRSH. 4 N-linked (GlcNAc...) asparagine glycosylation sites follow: N93, N112, N128, and N198. 2 PbH1 repeats span residues 199–229 and 230–251; these read SSNV…DTYR and SNNI…SFKP. The active-site Proton donor is D244. A disulfide bridge connects residues C246 and C263. Residues N252 and N264 are each glycosylated (N-linked (GlcNAc...) asparagine). The stretch at 253-273 is one PbH1 3 repeat; that stretch reads STNILVQNLHCNGSHGISVGS. The active site involves H267. N-linked (GlcNAc...) asparagine glycosylation is found at N291, N296, N328, and N353. A PbH1 4 repeat occupies 326–347; that stretch reads VKNITYDTALIDNVDWAIEITQ. The stretch at 361–409 is one PbH1 5 repeat; that stretch reads PSSLTISDVHIKNFRGTTSGSEDPYVGTIVCSSPDTCSDIYTSNINVTS. C391 and C397 are oxidised to a cystine. 2 N-linked (GlcNAc...) asparagine glycosylation sites follow: N406 and N429.

Belongs to the glycosyl hydrolase 28 family.

The protein resides in the secreted. The catalysed reaction is [(1-&gt;4)-alpha-D-galacturonosyl](n) + H2O = alpha-D-galacturonate + [(1-&gt;4)-alpha-D-galacturonosyl](n-1). In terms of biological role, specific in hydrolyzing the terminal glycosidic bond of polygalacturonic acid and oligogalacturonates. The chain is Probable exopolygalacturonase X (pgaX) from Aspergillus niger (strain ATCC MYA-4892 / CBS 513.88 / FGSC A1513).